A 428-amino-acid polypeptide reads, in one-letter code: uncharacterized protein (428 aa).

The segment at 1 to 49 (MRTQTFPPSSSSSRTTHPKKNRHSSNSSSMALVTPAKSSTGAAPKQSSQ) is disordered. The segment covering 24 to 49 (SSNSSSMALVTPAKSSTGAAPKQSSQ) has biased composition (polar residues).

This is an uncharacterized protein from Caenorhabditis elegans.